A 162-amino-acid chain; its full sequence is 6,7-dimethyl-8-ribityllumazine synthase (162 aa).

5-amino-6-(D-ribitylamino)uracil-binding positions include F22, 56-58 (TFE), and 80-82 (AVI). Residue 85–86 (GT) coordinates (2S)-2-hydroxy-3-oxobutyl phosphate. The Proton donor role is filled by H88. M113 serves as a coordination point for 5-amino-6-(D-ribitylamino)uracil. R127 is a binding site for (2S)-2-hydroxy-3-oxobutyl phosphate.

The protein belongs to the DMRL synthase family.

It catalyses the reaction (2S)-2-hydroxy-3-oxobutyl phosphate + 5-amino-6-(D-ribitylamino)uracil = 6,7-dimethyl-8-(1-D-ribityl)lumazine + phosphate + 2 H2O + H(+). Its pathway is cofactor biosynthesis; riboflavin biosynthesis; riboflavin from 2-hydroxy-3-oxobutyl phosphate and 5-amino-6-(D-ribitylamino)uracil: step 1/2. In terms of biological role, catalyzes the formation of 6,7-dimethyl-8-ribityllumazine by condensation of 5-amino-6-(D-ribitylamino)uracil with 3,4-dihydroxy-2-butanone 4-phosphate. This is the penultimate step in the biosynthesis of riboflavin. This is 6,7-dimethyl-8-ribityllumazine synthase from Anaeromyxobacter dehalogenans (strain 2CP-C).